Consider the following 157-residue polypeptide: NAD(P)H-quinone oxidoreductase subunit N (157 aa).

The protein belongs to the complex I NdhN subunit family. As to quaternary structure, NDH-1 can be composed of about 15 different subunits; different subcomplexes with different compositions have been identified which probably have different functions.

It localises to the cellular thylakoid membrane. It carries out the reaction a plastoquinone + NADH + (n+1) H(+)(in) = a plastoquinol + NAD(+) + n H(+)(out). The enzyme catalyses a plastoquinone + NADPH + (n+1) H(+)(in) = a plastoquinol + NADP(+) + n H(+)(out). Functionally, NDH-1 shuttles electrons from an unknown electron donor, via FMN and iron-sulfur (Fe-S) centers, to quinones in the respiratory and/or the photosynthetic chain. The immediate electron acceptor for the enzyme in this species is believed to be plastoquinone. Couples the redox reaction to proton translocation, and thus conserves the redox energy in a proton gradient. Cyanobacterial NDH-1 also plays a role in inorganic carbon-concentration. The chain is NAD(P)H-quinone oxidoreductase subunit N from Synechococcus sp. (strain CC9902).